Here is a 215-residue protein sequence, read N- to C-terminus: Small ribosomal subunit protein uS5 (215 aa).

A disordered region spans residues 1-62 (MTDSSPQSNP…QERDSEWQER (62 aa)). A compositionally biased stretch (low complexity) spans 9-28 (NPNAVPGAADVPAAAEGQQQ). Positions 29 to 61 (EQRRGGGRGERGDRRGGRRGDRRNQERDSEWQE) are enriched in basic and acidic residues. Positions 59–122 (WQERVVQIRR…ADGKKHLVKV (64 aa)) constitute an S5 DRBM domain.

Belongs to the universal ribosomal protein uS5 family. In terms of assembly, part of the 30S ribosomal subunit. Contacts proteins S4 and S8.

Functionally, with S4 and S12 plays an important role in translational accuracy. Its function is as follows. Located at the back of the 30S subunit body where it stabilizes the conformation of the head with respect to the body. The polypeptide is Small ribosomal subunit protein uS5 (Parasynechococcus marenigrum (strain WH8102)).